The primary structure comprises 300 residues: E3 ubiquitin-protein ligase RNF212B (300 aa).

The RING-type zinc-finger motif lies at 6–40 (CNQCFRKDGAHFFVTSCGHIFCKKCVTLEKCAVCG). A coiled-coil region spans residues 87–124 (LLIAFYKHRITKLETAMQEAQQALVSQDKELSVLRKEN). Residues 141–232 (YQGSRSITPR…SYRTSSASSG (92 aa)) are disordered. Over residues 155–165 (TSPSQSVTPRP) the composition is skewed to polar residues. Over residues 166-182 (SFQHSSQVVSRSSSAES) the composition is skewed to low complexity. Over residues 191–200 (GSLGQGGRGL) the composition is skewed to gly residues. The span at 211 to 232 (NETPSPASTHSLSYRTSSASSG) shows a compositional bias: polar residues.

As to quaternary structure, homodimer. In terms of processing, autoubiquitinated.

The protein resides in the chromosome. The catalysed reaction is S-ubiquitinyl-[E2 ubiquitin-conjugating enzyme]-L-cysteine + [acceptor protein]-L-lysine = [E2 ubiquitin-conjugating enzyme]-L-cysteine + N(6)-ubiquitinyl-[acceptor protein]-L-lysine.. Its pathway is protein modification; protein ubiquitination. In terms of biological role, ubiquitin E3 ligase that acts as a crucial factor for crossing-over (CO) formation during meiosis. Essential for normal prophase I progression and for ensuring appropriate CO designation in meiosis. Recruits key components of the cross-over machinery either directly ou indirectly, leading to the activation of the MutL-gamma complex. The function of RNF212B in CO designation is dependent on its catalytic activity. The polypeptide is E3 ubiquitin-protein ligase RNF212B (RNF212B) (Homo sapiens (Human)).